Consider the following 567-residue polypeptide: Oxygen-dependent choline dehydrogenase (567 aa).

Position 4–33 (4–33 (DYIIIGAGSAGNVLAARLTEDADVTVLLLE)) interacts with FAD. His-473 serves as the catalytic Proton acceptor.

This sequence belongs to the GMC oxidoreductase family. Requires FAD as cofactor.

The enzyme catalyses choline + A = betaine aldehyde + AH2. It catalyses the reaction betaine aldehyde + NAD(+) + H2O = glycine betaine + NADH + 2 H(+). It functions in the pathway amine and polyamine biosynthesis; betaine biosynthesis via choline pathway; betaine aldehyde from choline (cytochrome c reductase route): step 1/1. Functionally, involved in the biosynthesis of the osmoprotectant glycine betaine. Catalyzes the oxidation of choline to betaine aldehyde and betaine aldehyde to glycine betaine at the same rate. This is Oxygen-dependent choline dehydrogenase from Yersinia pestis (strain Pestoides F).